The following is a 367-amino-acid chain: Leu/Ile/Val-binding protein (367 aa).

Residues 1–23 form the signal peptide; that stretch reads MNMKGKALLAGCIALSLSNMAFA. Cysteine 76 and cysteine 101 are oxidised to a cystine.

The protein belongs to the leucine-binding protein family.

It localises to the periplasm. Functionally, this protein is a component of the leucine, isoleucine, valine, (threonine) transport system, which is one of the two periplasmic binding protein-dependent transport systems of the high-affinity transport of the branched-chain amino acids. This chain is Leu/Ile/Val-binding protein (livJ), found in Citrobacter freundii.